The sequence spans 220 residues: Cell division protein SepF (220 aa).

The disordered stretch occupies residues 1–120 (MAIKDAFNKM…RREQYQHAAH (120 aa)). Positions 26–35 (LSSKKQEEPV) are enriched in basic and acidic residues. Positions 39–79 (QQTSRPNQQQQAARASQPQQPKQARPQMQAQQRPQSQSRAA) are enriched in low complexity. Over residues 93-102 (VSHDYNDRRA) the composition is skewed to basic and acidic residues.

This sequence belongs to the SepF family. In terms of assembly, homodimer. Interacts with FtsZ.

The protein localises to the cytoplasm. Its function is as follows. Cell division protein that is part of the divisome complex and is recruited early to the Z-ring. Probably stimulates Z-ring formation, perhaps through the cross-linking of FtsZ protofilaments. Its function overlaps with FtsA. The polypeptide is Cell division protein SepF (Streptococcus equi subsp. equi (strain 4047)).